Here is an 819-residue protein sequence, read N- to C-terminus: Protein kinase C-binding protein NELL2 (819 aa).

Residues M1–G24 form the signal peptide. N-linked (GlcNAc...) asparagine glycans are attached at residues N56, N228, N296, and N301. Residues P67 to C231 enclose the Laminin G-like domain. Residues R275–K334 enclose the VWFC 1 domain. The region spanning G400 to E442 is the EGF-like 1 domain. Cystine bridges form between C404–C416, C410–C425, and C427–C441. Residues D443, I444, and E446 each coordinate Ca(2+). Residues D443–T484 enclose the EGF-like 2; calcium-binding domain. 9 cysteine pairs are disulfide-bonded: C447–C460, C454–C469, C471–C483, C489–C502, C496–C511, C513–C524, C528–C538, C532–C544, and C546–C555. 3 residues coordinate Ca(2+): N462, T463, and S466. The EGF-like 3; calcium-binding domain occupies E485 to K525. Residue N520 is glycosylated (N-linked (GlcNAc...) asparagine). Residues A526–E556 enclose the EGF-like 4 domain. An O-linked (GlcNAc...) threonine glycan is attached at T551. Ca(2+)-binding residues include D558, I559, and E561. The EGF-like 5; calcium-binding domain maps to D558 to E604. Disulfide bonds link C562/C575, C569/C584, and C586/C603. The Ca(2+) site is built by N577, L578, and W581. Residues D605, I606, and E608 each coordinate Ca(2+). Positions D605–T640 constitute an EGF-like 6; calcium-binding domain. 3 disulfides stabilise this stretch: C609/C622, C616/C631, and C633/C639. N-linked (GlcNAc...) asparagine glycosylation occurs at N618. Positions 624, 625, and 628 each coordinate Ca(2+). N-linked (GlcNAc...) asparagine glycosylation occurs at N638. The region spanning S701–V759 is the VWFC 2 domain.

As to quaternary structure, homotrimer. Interacts with NICOL1; this interaction triggers epididymal differentiation. Interacts (via EGF domains) with ROBO3 (via FN domains); binding to ROBO3 induces repulsive guidance cue for commissural axons. In terms of tissue distribution, expressed in brain and testis but not in epididymis. Expressed in regions flanking the commissural axon trajectory, including the ventral horn.

Its subcellular location is the secreted. In terms of biological role, plays multiple roles in neural tissues, regulates neuronal proliferation, survival, differentiation, polarization, as well as axon guidance and synaptic functions. Plays an important role in axon development during neuronal differentiation through the MAPK intracellular signaling pathway. Via binding to its receptor ROBO3, plays a role in axon guidance, functioning as a repulsive axon guidance cue that contributes to commissural axon guidance to the midline. Required for neuron survival through the modulation of MAPK signaling pathways too. Involved in the regulation of hypothalamic GNRH secretion and the control of puberty. Epididymal-secreted protein that signals through a ROS1-pathway to regulate the epididymal initial segment (IS) maturation, sperm maturation and male fertility. In Mus musculus (Mouse), this protein is Protein kinase C-binding protein NELL2.